The chain runs to 211 residues: MFRNSYIQQNSDIQAAGGLVPMVVEQSARGERAYDIYSRLLKERVIFLVGPVEDYMANLICAQLLFLEAENPDKDIHLYINSPGGSVTAGMSIYDTMQFIKPNVSTTCIGQACSMGAFLLTAGAEGKRFCLPNSRVMIHQPLGGFQGQASDIEIHAKEILFIRERLNTLMAKHSGHTLEEIERDTNRDNFMSAEAARDYGLIDAVIDKRPA.

Catalysis depends on Ser-114, which acts as the Nucleophile. His-139 is an active-site residue.

It belongs to the peptidase S14 family. Fourteen ClpP subunits assemble into 2 heptameric rings which stack back to back to give a disk-like structure with a central cavity, resembling the structure of eukaryotic proteasomes.

It localises to the cytoplasm. The catalysed reaction is Hydrolysis of proteins to small peptides in the presence of ATP and magnesium. alpha-casein is the usual test substrate. In the absence of ATP, only oligopeptides shorter than five residues are hydrolyzed (such as succinyl-Leu-Tyr-|-NHMec, and Leu-Tyr-Leu-|-Tyr-Trp, in which cleavage of the -Tyr-|-Leu- and -Tyr-|-Trp bonds also occurs).. In terms of biological role, cleaves peptides in various proteins in a process that requires ATP hydrolysis. Has a chymotrypsin-like activity. Plays a major role in the degradation of misfolded proteins. This Pseudomonas fluorescens (strain SBW25) protein is ATP-dependent Clp protease proteolytic subunit.